The chain runs to 486 residues: uncharacterized protein (486 aa).

9 LRR repeats span residues 18–39 (NLKK…KKLV), 43–59 (ELHI…NIPE), 60–81 (NIKS…TKLK), 82–103 (NITY…ILPH), 104–125 (SIEF…NNLV), 126–147 (NLKK…FPIS), 148–168 (IVEL…EKLI), 169–190 (NLKK…IKFP), and 198–219 (DYQS…IEYE).

This is an uncharacterized protein from Amsacta moorei entomopoxvirus (AmEPV).